The chain runs to 470 residues: Dendritic cell-specific transmembrane protein (470 aa).

The Cytoplasmic segment spans residues methionine 1 to leucine 33. Residues glycine 34 to isoleucine 54 traverse the membrane as a helical segment. Leucine 55 is a topological domain (extracellular). A helical transmembrane segment spans residues proline 56–lysine 76. Residues arginine 77 to alanine 97 lie on the Cytoplasmic side of the membrane. The helical transmembrane segment at leucine 98 to phenylalanine 118 threads the bilayer. The Extracellular portion of the chain corresponds to arginine 119–serine 209. A helical membrane pass occupies residues valine 210 to phenylalanine 230. Topologically, residues leucine 231–threonine 292 are cytoplasmic. Residues leucine 293–valine 313 form a helical membrane-spanning segment. At aspartate 314 to threonine 376 the chain is on the extracellular side. Residues tryptophan 377–leucine 397 traverse the membrane as a helical segment. The Cytoplasmic portion of the chain corresponds to methionine 398–leucine 470.

As to quaternary structure, interacts with CREB3. Monomer. Homodimer. Isoform 1 interacts (via the C-terminus cytoplasmic tail) with OS9 isoform 1 (via the C-terminus tail); the interaction induces DCSTAMP redistribution to the endoplasmic reticulum-Golgi intermediate compartment. Isoform 1 interacts (via the C-terminus cytoplasmic tail) with OS9 isoform 2 (via the C-terminus tail). Glycosylated. As to expression, expressed in macrophages and bone marrow dendritic cells (BM-DC). Weakly expressed in the spleen and lymph node. Highly expressed in multi-nuclear osteoclasts compared to mono-nuclear macrophages. Expressed in foreign body giant cells (FBGCs). Isoform 1 and isoform 2 are expressed in osteoclasts.

The protein resides in the cell membrane. Its subcellular location is the endoplasmic reticulum membrane. It is found in the endoplasmic reticulum-Golgi intermediate compartment membrane. It localises to the endosome. Its function is as follows. Probable cell surface receptor that plays several roles in cellular fusion, cell differentiation, bone and immune homeostasis. Plays a role in TNFSF11-mediated osteoclastogenesis. Cooperates with OCSTAMP in modulating cell-cell fusion in both osteoclasts and foreign body giant cells (FBGCs). Participates in osteoclast bone resorption. Involved in inducing the expression of tartrate-resistant acid phosphatase in osteoclast precursors. Plays a role in haematopoietic stem cell differentiation of bone marrow cells toward the myeloid lineage. Inhibits the development of neutrophilic granulocytes. Plays also a role in the regulation of dendritic cell (DC) antigen presentation activity by controlling phagocytic activity. Involved in the maintenance of immune self-tolerance and avoidance of autoimmune reactions. The sequence is that of Dendritic cell-specific transmembrane protein (Dcstamp) from Mus musculus (Mouse).